Reading from the N-terminus, the 114-residue chain is Cell division protein FtsB (114 aa).

The Cytoplasmic segment spans residues methionine 1–lysine 3. Residues leucine 4–valine 21 traverse the membrane as a helical segment. Residues glycine 22–histidine 114 are Periplasmic-facing. Residues arginine 31 to glycine 62 are a coiled coil.

It belongs to the FtsB family. Part of a complex composed of FtsB, FtsL and FtsQ.

The protein resides in the cell inner membrane. In terms of biological role, essential cell division protein. May link together the upstream cell division proteins, which are predominantly cytoplasmic, with the downstream cell division proteins, which are predominantly periplasmic. In Edwardsiella ictaluri (strain 93-146), this protein is Cell division protein FtsB.